The following is a 580-amino-acid chain: PX domain-containing protein kinase-like protein (580 aa).

The PX domain occupies Leu14–Ala126. A Protein kinase domain is found at Phe88–Lys481. The interval Glu433–Arg551 is disordered. 2 stretches are compositionally biased toward basic residues: residues Ile437–Ser448 and Lys457–Arg469. Residues Ser483 to Ala514 are compositionally biased toward low complexity. Residues Leu515 to Pro531 show a composition bias toward pro residues. One can recognise a WH2 domain in the interval Val549–Lys568.

It belongs to the protein kinase superfamily.

The protein resides in the cytoplasm. The protein localises to the cell membrane. Its function is as follows. Binds to and modulates brain Na,K-ATPase subunits ATP1B1 and ATP1B3 and may thereby participate in the regulation of electrical excitability and synaptic transmission. May not display kinase activity. This chain is PX domain-containing protein kinase-like protein, found in Rattus norvegicus (Rat).